A 404-amino-acid chain; its full sequence is Putative glutamate--cysteine ligase 2 (404 aa).

The tract at residues 377–404 (GPAGKRAHEGGRSFRPAAGAPMSIRGQE) is disordered.

Belongs to the glutamate--cysteine ligase type 2 family. YbdK subfamily.

The enzyme catalyses L-cysteine + L-glutamate + ATP = gamma-L-glutamyl-L-cysteine + ADP + phosphate + H(+). ATP-dependent carboxylate-amine ligase which exhibits weak glutamate--cysteine ligase activity. The sequence is that of Putative glutamate--cysteine ligase 2 from Pseudomonas aeruginosa (strain UCBPP-PA14).